An 870-amino-acid polypeptide reads, in one-letter code: Elastin (870 aa).

The first 27 residues, 1–27 (MAGLTAAVPQPGVLLILLLNLLHPAQP), serve as a signal peptide directing secretion. A 4-hydroxyproline mark is found at Pro39 and Pro75. Pro87 is subject to Hydroxyproline. 4-hydroxyproline is present on Pro105. An allysine mark is found at Lys122 and Lys126. 4 positions are modified to 4-hydroxyproline: Pro207, Pro220, Pro223, and Pro244. Lys290 and Lys309 each carry allysine. At Pro338 the chain carries 4-hydroxyproline. Residues Lys360 and Lys363 each carry the allysine modification. Pro375 is modified (hydroxyproline). 4-hydroxyproline occurs at positions 402 and 408. A hydroxyproline mark is found at Pro413 and Pro418. An allysine mark is found at Lys434, Lys438, Lys441, Lys485, and Lys488. 4-hydroxyproline is present on residues Pro518 and Pro539. Lys554, Lys558, Lys615, Lys619, and Lys623 each carry allysine. Residues Pro637, Pro646, Pro662, and Pro670 each carry the 4-hydroxyproline modification. Allysine occurs at positions 677 and 680. Pro715 is subject to 4-hydroxyproline. Allysine is present on residues Lys730, Lys734, Lys793, and Lys796. Pro842 is subject to 4-hydroxyproline. The cysteines at positions 860 and 865 are disulfide-linked.

It belongs to the elastin family. The polymeric elastin chains are cross-linked together into an extensible 3D network. Forms a ternary complex with BGN and MFAP2. Interacts with MFAP2 via divalent cations (calcium &gt; magnesium &gt; manganese) in a dose-dependent and saturating manner. Interacts with FBLN5 and FBN1. Forms a ternary complex with FBN1 and FBLN2 or FBLN5. Interacts with MFAP4 in a Ca (2+)-dependent manner; this interaction promotes ELN self-assembly. Interacts with EFEMP2 with moderate affinity. In terms of processing, elastin is formed through the cross-linking of its soluble precursor tropoelastin. Cross-linking is initiated through the action of lysyl oxidase on exposed lysines to form allysine. Subsequent spontaneous condensation reactions with other allysine or unmodified lysine residues result in various bi-, tri-, and tetrafunctional cross-links. The most abundant cross-links in mature elastin fibers are lysinonorleucine, allysine aldol, desmosine, and isodesmosine. Hydroxylation on proline residues within the sequence motif, GXPG, is most likely to be 4-hydroxy as this fits the requirement for 4-hydroxylation in vertebrates.

It localises to the secreted. The protein localises to the extracellular space. It is found in the extracellular matrix. Its function is as follows. Major structural protein of tissues such as aorta and nuchal ligament, which must expand rapidly and recover completely. Molecular determinant of the late arterial morphogenesis, stabilizing arterial structure by regulating proliferation and organization of vascular smooth muscle. This is Elastin (Eln) from Rattus norvegicus (Rat).